A 446-amino-acid polypeptide reads, in one-letter code: tRNA-2-methylthio-N(6)-dimethylallyladenosine synthase (446 aa).

Residues 3-120 form the MTTase N-terminal domain; it reads KKIYIKTFGC…LPEMLKQRRS (118 aa). The [4Fe-4S] cluster site is built by Cys12, Cys49, Cys83, Cys157, Cys161, and Cys164. The Radical SAM core domain occupies 143–375; it reads KVEGATAFVS…QAVIDQNTRR (233 aa). The TRAM domain occupies 378-444; that stretch reads DEMVGSVQRI…AYTLRGEIVV (67 aa).

The protein belongs to the methylthiotransferase family. MiaB subfamily. Monomer. [4Fe-4S] cluster is required as a cofactor.

It is found in the cytoplasm. The catalysed reaction is N(6)-dimethylallyladenosine(37) in tRNA + (sulfur carrier)-SH + AH2 + 2 S-adenosyl-L-methionine = 2-methylsulfanyl-N(6)-dimethylallyladenosine(37) in tRNA + (sulfur carrier)-H + 5'-deoxyadenosine + L-methionine + A + S-adenosyl-L-homocysteine + 2 H(+). Its function is as follows. Catalyzes the methylthiolation of N6-(dimethylallyl)adenosine (i(6)A), leading to the formation of 2-methylthio-N6-(dimethylallyl)adenosine (ms(2)i(6)A) at position 37 in tRNAs that read codons beginning with uridine. In Herminiimonas arsenicoxydans, this protein is tRNA-2-methylthio-N(6)-dimethylallyladenosine synthase.